Here is a 789-residue protein sequence, read N- to C-terminus: MDAYWRASNYLSVGQIYLLDNPLLSEPLKREHIKPRLLGHWGTSPGLNMLYVHLNRVIKRDDLEMMYVIGPGHGGPSLVAHAYLEGTYSEVYPDISQDAEGLRKLFKQFSFPGGIPSHVAPETPGSIHEGGELGYALSHAYGAAFDNPELIVACVVGDGEAETGPLATGWHGNKFLNPARDGCVLPILHLNGYKIANPCFLARIPREELQKFFEGMGYAPLFVEGHDPADVHQQLAAALDTALADIRRIQTDARVNGNLKRPAWPMIVFRTPKGWTCPAEIDGKKCEDYWRSHQVPMGDMDKPEHIRILEGWMKSYRPEELFDGDGRLTAELAALAPTGRRRMSDNPHANGGLLLRDLKMPDFRDYAVAVQSPGAATAESARVMGSYLRDVMKLNLKSGNFRLFSPDENNSNRWQDVLEVTDRCFMADIYPEDDHLSPDGRLMEVLSEHQSQGWLEGYLLTGRHGFFSCYEAFIHIIDSMFNQHAKWLKVCNEIPWRRPIASLNYFLSSHVWRQDHNGFSHQDPGFIDHVVNKKADIIRVYLPPDANTLLSVTDHCLRSRNYINVVVAGKQPSPQWLTMDQAVKHCTEGLGIWEWASNDKGCEPDVVMACCGDVPTLETLAAVQLLREHLPELKVRVINVVNLMKLQPSGEHPHGLPDRDFDALFTKDKPIIFAFHGYPWLIHRLTYRRTNHANLHVRGYKEEGTTTTPFDMVVLNHLDRFHLVEDVIDRLPQLGARAAYFKQAIHERLIDHRHHIEKYGEDMPVISGWKWGAGSAGKAQGTSTKGDNV.

This sequence belongs to the XFP family. It depends on thiamine diphosphate as a cofactor.

The polypeptide is Probable phosphoketolase 1 (Rhizobium meliloti (strain 1021) (Ensifer meliloti)).